We begin with the raw amino-acid sequence, 141 residues long: Albumin-8 (141 aa).

A signal peptide spans 1-25 (MARFSIVFAAAGVLLLVAMAPVSEA). The propeptide occupies 26–38 (STTTIITTIIEEN). Disulfide bonds link C49–C100, C62–C89, C90–C132, and C102–C139.

The protein belongs to the 2S seed storage albumins family. As to quaternary structure, heterodimer; disulfide-linked.

Functionally, this is a 2S seed storage protein. In Helianthus annuus (Common sunflower), this protein is Albumin-8.